Consider the following 362-residue polypeptide: DNA polymerase IV (362 aa).

In terms of domain architecture, UmuC spans 6–187 (IIHVDMDAFY…LPVSSFHGVG (182 aa)). The Mg(2+) site is built by Asp10 and Asp105. Glu106 is an active-site residue.

It belongs to the DNA polymerase type-Y family. As to quaternary structure, monomer. Requires Mg(2+) as cofactor.

The protein localises to the cytoplasm. It carries out the reaction DNA(n) + a 2'-deoxyribonucleoside 5'-triphosphate = DNA(n+1) + diphosphate. Its function is as follows. Poorly processive, error-prone DNA polymerase involved in untargeted mutagenesis. Copies undamaged DNA at stalled replication forks, which arise in vivo from mismatched or misaligned primer ends. These misaligned primers can be extended by PolIV. Exhibits no 3'-5' exonuclease (proofreading) activity. May be involved in translesional synthesis, in conjunction with the beta clamp from PolIII. The polypeptide is DNA polymerase IV (Leptospira interrogans serogroup Icterohaemorrhagiae serovar Lai (strain 56601)).